We begin with the raw amino-acid sequence, 100 residues long: Small ribosomal subunit protein uS14c (100 aa).

The protein belongs to the universal ribosomal protein uS14 family. As to quaternary structure, part of the 30S ribosomal subunit.

The protein resides in the plastid. The protein localises to the chloroplast. In terms of biological role, binds 16S rRNA, required for the assembly of 30S particles. This is Small ribosomal subunit protein uS14c from Psilotum nudum (Whisk fern).